A 478-amino-acid chain; its full sequence is JmjC domain-containing histone demethylation protein 1 (478 aa).

A PHD-type zinc finger spans residues 5–68; that stretch reads SESCPLCKVH…IYHCPECVPK (64 aa). In terms of domain architecture, JmjC spans 217–383; that stretch reads SDVAKLGVDF…MQLKINEIER (167 aa). Thr266 contributes to the substrate binding site. Fe cation contacts are provided by His269 and Asp271. Lys286 provides a ligand contact to substrate. His351 is a Fe cation binding site.

The protein belongs to the JHDM1 histone demethylase family. The cofactor is Fe(2+).

The protein localises to the nucleus. The catalysed reaction is N(6),N(6)-dimethyl-L-lysyl(36)-[histone H3] + 2 2-oxoglutarate + 2 O2 = L-lysyl(36)-[histone H3] + 2 formaldehyde + 2 succinate + 2 CO2. Functionally, histone demethylase that specifically demethylates 'Lys-36' of histone H3, thereby playing a central role in histone code. The chain is JmjC domain-containing histone demethylation protein 1 (JHD1) from Candida albicans (strain SC5314 / ATCC MYA-2876) (Yeast).